Consider the following 747-residue polypeptide: Flowering time control protein FCA (747 aa).

A disordered region spans residues 80–101; it reads YSVRPTTPPVQQPLSGQKRGYP. 2 RRM domains span residues 120 to 201 and 211 to 291; these read VKLF…YADG and FKLF…FAEP. The segment covering 291 to 301 has biased composition (basic and acidic residues); that stretch reads PKRPKPGESRE. Residues 291–503 are disordered; sequence PKRPKPGESR…QQPLQKMQHP (213 aa). Composition is skewed to polar residues over residues 320-353 and 395-406; these read RPTSNFGDSSGDVSHTNPWRPATSRNVGPPSNTG and SSSATLQQQNRA. The span at 448-460 shows a compositional bias: low complexity; that stretch reads SSQLPTSQLPPQQ. Positions 461–498 are enriched in polar residues; the sequence is NISRATAPQTPLNINLRPTTVSSATVQFPPRSQQQPLQ. One can recognise a WW domain in the interval 591 to 624; the sequence is GSVKCTWTEHTSPDGFKYYYNGLTGESKWEKPEE. The span at 630 to 641 shows a compositional bias: basic and acidic residues; that stretch reads REQQKQQQHQEK. 2 disordered regions span residues 630–707 and 722–747; these read REQQ…SGIG and AASMNDISRTQQSRQSPQELMWKNKA. Positions 642–673 are enriched in low complexity; that stretch reads PTIQQSQTQLQPLQQQPQQVQQQYQGQQLQQP. Polar residues-rich tracts occupy residues 674–707 and 726–739; these read FYSSLYPTPGASHNTQYPSLPVGQNSQFPMSGIG and NDISRTQQSRQSPQ.

In terms of assembly, interacts (via C-terminus) with SWI3B and (via WW domain) with FY (via PPLPP motifs). In terms of tissue distribution, constitutively expressed, but the negative feedback maintains the active isoform a low level throughout much of the plant, except in meristematic cells at a specific time in development.

The protein localises to the nucleus. Functionally, plays a major role in the promotion of the transition of the vegetative meristem to reproductive development. Plays a role in the regulation of flowering time in the autonomous flowering pathway by decreasing FLOWERING LOCUS C mRNA levels. Required for RNA-mediated chromatin silencing of a range of loci in the genome. Cotranscriptionally recognizes aberrant RNA and marks it for silencing. Controls alternative cleavage and polyadenylation on pre-mRNAs and antisense RNAs. Acts redundantly with FPA to prevent the expression of distally polyadenylated antisense RNAs at the FLC locus. The sequence is that of Flowering time control protein FCA (FCA) from Arabidopsis thaliana (Mouse-ear cress).